The following is a 637-amino-acid chain: Early transcription factor 70 kDa subunit (637 aa).

Belongs to the helicase family. VETF subfamily. In terms of assembly, heterodimer of a 70 kDa and a 82 kDa subunit. Part of the early transcription complex composed of ETF, RAP94/OPG109, and the DNA-directed RNA polymerase. Post-translationally, apparently non-glycosylated.

Its subcellular location is the virion. In terms of biological role, acts with RNA polymerase to initiate transcription from early gene promoters. Is recruited by the RPO-associated protein of 94 kDa RAP94/OPG109 to form the early transcription complex, which also contains the core RNA polymerase. ETF heterodimer binds to early gene promoters. In Monkeypox virus, this protein is Early transcription factor 70 kDa subunit (OPG118).